The following is a 144-amino-acid chain: Large ribosomal subunit protein uL22 (144 aa).

Positions 1–38 (MAETQTTKKGAKRVRQPVPARRSKPNRPAKAAPGPHAS) are disordered. Over residues 9–27 (KGAKRVRQPVPARRSKPNR) the composition is skewed to basic residues.

The protein belongs to the universal ribosomal protein uL22 family. Part of the 50S ribosomal subunit.

Functionally, this protein binds specifically to 23S rRNA; its binding is stimulated by other ribosomal proteins, e.g. L4, L17, and L20. It is important during the early stages of 50S assembly. It makes multiple contacts with different domains of the 23S rRNA in the assembled 50S subunit and ribosome. The globular domain of the protein is located near the polypeptide exit tunnel on the outside of the subunit, while an extended beta-hairpin is found that lines the wall of the exit tunnel in the center of the 70S ribosome. The polypeptide is Large ribosomal subunit protein uL22 (Anaeromyxobacter sp. (strain Fw109-5)).